The following is a 291-amino-acid chain: Porphobilinogen deaminase (291 aa).

At cysteine 237 the chain carries S-(dipyrrolylmethanemethyl)cysteine.

It belongs to the HMBS family. As to quaternary structure, monomer. It depends on dipyrromethane as a cofactor.

The enzyme catalyses 4 porphobilinogen + H2O = hydroxymethylbilane + 4 NH4(+). Its pathway is porphyrin-containing compound metabolism; protoporphyrin-IX biosynthesis; coproporphyrinogen-III from 5-aminolevulinate: step 2/4. Functionally, tetrapolymerization of the monopyrrole PBG into the hydroxymethylbilane pre-uroporphyrinogen in several discrete steps. The protein is Porphobilinogen deaminase of Clostridium acetobutylicum (strain ATCC 824 / DSM 792 / JCM 1419 / IAM 19013 / LMG 5710 / NBRC 13948 / NRRL B-527 / VKM B-1787 / 2291 / W).